We begin with the raw amino-acid sequence, 122 residues long: UPF0102 protein VV1_0590 (122 aa).

Belongs to the UPF0102 family.

The sequence is that of UPF0102 protein VV1_0590 from Vibrio vulnificus (strain CMCP6).